A 241-amino-acid polypeptide reads, in one-letter code: MTEVEARIQLEPSWKAKVGDWLLCSQMQELSAFLRQRKAVGARVFPPGPQIFAAFDATPFDQVKVVILGQDPYHGEGQAHGLCFSVLPGVPVPPSLLNIYKEIQDDLGIARPDHGYLMPWARQGVLLLNAVLTVEQGRAGAHQNKGWEGFTDHVVETLNREREGLVFLLWGSYAQSKGRVIDQARHRVFKAPHPSPLSAHRGFLGCQHFSKTNAHLQRRGISPIDWSLPPRNELDTTSAGA.

Aspartate 71 (proton acceptor) is an active-site residue. Residues 221-241 (ISPIDWSLPPRNELDTTSAGA) form a disordered region.

Belongs to the uracil-DNA glycosylase (UDG) superfamily. UNG family.

It localises to the cytoplasm. It catalyses the reaction Hydrolyzes single-stranded DNA or mismatched double-stranded DNA and polynucleotides, releasing free uracil.. Functionally, excises uracil residues from the DNA which can arise as a result of misincorporation of dUMP residues by DNA polymerase or due to deamination of cytosine. This Xanthomonas oryzae pv. oryzae (strain MAFF 311018) protein is Uracil-DNA glycosylase.